We begin with the raw amino-acid sequence, 81 residues long: UPF0729 protein C18orf32 homolog (81 aa).

Residues alanine 45 to threonine 58 are compositionally biased toward polar residues. The disordered stretch occupies residues alanine 45 to aspartate 81.

Belongs to the UPF0729 family.

This is UPF0729 protein C18orf32 homolog from Anoplopoma fimbria (Sablefish).